Consider the following 353-residue polypeptide: Uroporphyrinogen decarboxylase (353 aa).

Residues 30–34 (RQAGR), Asp-79, Tyr-154, Ser-209, and His-332 each bind substrate.

It belongs to the uroporphyrinogen decarboxylase family. Homodimer.

The protein localises to the cytoplasm. It catalyses the reaction uroporphyrinogen III + 4 H(+) = coproporphyrinogen III + 4 CO2. It participates in porphyrin-containing compound metabolism; protoporphyrin-IX biosynthesis; coproporphyrinogen-III from 5-aminolevulinate: step 4/4. Functionally, catalyzes the decarboxylation of four acetate groups of uroporphyrinogen-III to yield coproporphyrinogen-III. The polypeptide is Uroporphyrinogen decarboxylase (Mycobacterium marinum (strain ATCC BAA-535 / M)).